A 912-amino-acid polypeptide reads, in one-letter code: Isoleucine--tRNA ligase (912 aa).

Positions 57 to 67 (PYANGDIHLGT) match the 'HIGH' region motif. Glu549 lines the L-isoleucyl-5'-AMP pocket. The short motif at 590–594 (KMSKS) is the 'KMSKS' region element. Lys593 lines the ATP pocket. The Zn(2+) site is built by Cys880, Cys883, Cys900, and Cys903.

It belongs to the class-I aminoacyl-tRNA synthetase family. IleS type 1 subfamily. In terms of assembly, monomer. Zn(2+) serves as cofactor.

The protein localises to the cytoplasm. The enzyme catalyses tRNA(Ile) + L-isoleucine + ATP = L-isoleucyl-tRNA(Ile) + AMP + diphosphate. Its function is as follows. Catalyzes the attachment of isoleucine to tRNA(Ile). As IleRS can inadvertently accommodate and process structurally similar amino acids such as valine, to avoid such errors it has two additional distinct tRNA(Ile)-dependent editing activities. One activity is designated as 'pretransfer' editing and involves the hydrolysis of activated Val-AMP. The other activity is designated 'posttransfer' editing and involves deacylation of mischarged Val-tRNA(Ile). In Fervidobacterium pennivorans (strain DSM 9078 / Ven5), this protein is Isoleucine--tRNA ligase.